Reading from the N-terminus, the 229-residue chain is C-&gt;U-editing enzyme APOBEC-1 (229 aa).

In terms of domain architecture, CMP/dCMP-type deaminase spans 10–134 (VDPTLRRRIE…QRNRQGLRDL (125 aa)). A Zn(2+)-binding site is contributed by histidine 61. Glutamate 63 (proton donor) is an active-site residue. Zn(2+)-binding residues include cysteine 93 and cysteine 96.

This sequence belongs to the cytidine and deoxycytidylate deaminase family. In terms of assembly, homodimer. Interacts with A1CF; form an mRNA editing complex. Interacts with RBM47; form an mRNA editing complex. Found in a complex with CELF2/CUGBP2 and A1CF. Interacts with HNRPAB. Interacts with SYNCRIP. Requires Zn(2+) as cofactor. In terms of tissue distribution, expressed in the spleen. Expressed at lower level in the kidney, testis, lung, brain and liver.

The protein resides in the cytoplasm. Its subcellular location is the nucleus. The enzyme catalyses a cytidine in mRNA + H2O + H(+) = a uridine in mRNA + NH4(+). The catalysed reaction is cytidine(6666) in apoB mRNA + H2O + H(+) = uridine(6666) in apoB mRNA + NH4(+). Functionally, cytidine deaminase catalyzing the cytidine to uridine postranscriptional editing of a variety of mRNAs. Form complexes with cofactors that confer differential editing activity and selectivity. Responsible for the postranscriptional editing of a CAA codon for Gln to a UAA codon for stop in the apolipoprotein B mRNA. Also involved in CGA (Arg) to UGA (Stop) editing in the NF1 mRNA. May also play a role in the epigenetic regulation of gene expression by participating in DNA demethylation. This Mus musculus (Mouse) protein is C-&gt;U-editing enzyme APOBEC-1.